A 222-amino-acid polypeptide reads, in one-letter code: DNA ADP-ribosyl transferase (222 aa).

The 198-residue stretch at 12–209 (TLIYHITHLN…PVRVRRSWYY (198 aa)) folds into the DarT domain. NAD(+) is bound by residues 16–18 (HIT), Gly25, and Leu33. An NAD(+)-binding element region spans residues 38–56 (RPPTQQNVAYGHIQAHRAQ). A DNA-binding region spans residues 47–53 (YGHIQAH). Arg54 contributes to the NAD(+) binding site. Arg54 (proton acceptor) is an active-site residue. 3 consecutive DNA-binding regions follow at residues 78–83 (RSPMLY), 148–151 (SYWA), and 154–158 (REKKQ). The segment at 119–160 (TDRHAAVQYVCFFHKLEHLKALDWQAIQASYWANVREKKQAE) is ADP-ribosylating turn-turn loop. The active site involves Glu160.

The protein belongs to the DarT ADP-ribosyltransferase family. As to quaternary structure, interacts with cognate antitoxin DarG (via C-terminus); this heterodimeric complex neutralizes the toxic effect of DarT by preventing ssDNA binding to DarT and consequently inactivating the toxin by direct protein-protein interactions.

It catalyses the reaction a thymidine in DNA + NAD(+) = an N-(ADP-alpha-D-ribosyl)-thymidine in DNA + nicotinamide + H(+). Functionally, toxic component of the hybrid type II/IV toxin-antitoxin (TA) system DarTG, which plays a crucial role in controlling bacterial growth and bacteriophage infection. Its toxic effect is neutralized by cognate antitoxin DarG. In case of phage infection, DarT toxin ADP-ribosylates DNA, which inhibits both viral DNA and RNA synthesis and leads to abortive infection. ADP-ribosylates ssDNA on the second thymidine of the consensus sequence 5'-TNTC-3'; the protein does not auto-modify. Has no activity on dsDNA in vitro. This leads to a decrease in DNA replication. Upon expression in E.coli inhibits cell growth, colony formation and induces the SOS response. Expression leads to bacteriostasis; however if cells grow over an hour in the presence of toxin, growth is no longer restored on antitoxin-inducing plates. In E.coli ADP-ribosylates genomic DNA (gDNA), which induces RecA expression (a marker for DNA damage). This Thermus aquaticus (strain ATCC BAA-2747 / Y51MC23) protein is DNA ADP-ribosyl transferase.